The primary structure comprises 358 residues: MSEATVWSDLPGELLDHIANGLFSKVELLRFRSICKTFRSAVDSDKNFLDHLKRNRRRLLSPYSTGKTCSLSPAAFYRVVLSSYPDKGWLIKLQDAYVSSQKQLLSPLSRFSIKSSGKTLDLLEFTVSEIHQSYDVEYLYYNSTRASFNFARVVLAEDFVFIVDNYKKIWLCNSNESDSHWVRIMDEEVKLFSDIVFHKGYMYALDLTGAVWWISLSEFGIFQFGPSSTPMDYCDIDECKDKRFVEYCGDLCIVHRFSRKFRIKRVDIDMTVGFKVYKMDEELVEYVEVKSLGDKAFVMATDSCFSVLAREYYGCLENSIYFTEQNNVKVFKLGDGSITNMVDSSFQSCFQMLIPPLV.

An F-box domain is found at 4–51 (ATVWSDLPGELLDHIANGLFSKVELLRFRSICKTFRSAVDSDKNFLDH).

Part of a SCF (ASK-cullin-F-box) protein ligase complex.

It participates in protein modification; protein ubiquitination. Component of SCF(ASK-cullin-F-box) E3 ubiquitin ligase complexes, which may mediate the ubiquitination and subsequent proteasomal degradation of target proteins. This is F-box protein At4g35733 from Arabidopsis thaliana (Mouse-ear cress).